Here is a 484-residue protein sequence, read N- to C-terminus: Probable autolysin PH (484 aa).

In terms of domain architecture, Peptidase C51 spans 5 to 148 (KNQAEKWFDN…YYDDPMYFIR (144 aa)). A MurNAc-LAA domain is found at 181–363 (IMLVAGHGYN…YSKLIAGAIH (183 aa)). Residues 402 to 472 (KETGYYTVAN…IATGEVDKAG (71 aa)) enclose the SH3b domain.

It carries out the reaction Hydrolyzes the link between N-acetylmuramoyl residues and L-amino acid residues in certain cell-wall glycopeptides.. Has weak lytic activity toward S.aureus cells. Full-length protein has no activity, but fusion of the Peptidase C51 domain to the lysostaphin SH3 cell wall binding domain yields an active chimeric enzyme, suggesting that PH may be functional. The chain is Probable autolysin PH from Staphylococcus aureus (strain NCTC 8325 / PS 47).